The chain runs to 510 residues: Arginine biosynthesis bifunctional protein ArgJ, chloroplastic (510 aa).

T223, K249, E359, N505, and T510 together coordinate substrate.

This sequence belongs to the ArgJ family. In terms of assembly, heterodimer of an alpha and a beta chain.

The protein resides in the plastid. It localises to the chloroplast. It catalyses the reaction N(2)-acetyl-L-ornithine + L-glutamate = N-acetyl-L-glutamate + L-ornithine. The enzyme catalyses L-glutamate + acetyl-CoA = N-acetyl-L-glutamate + CoA + H(+). The protein operates within amino-acid biosynthesis; L-arginine biosynthesis; L-ornithine and N-acetyl-L-glutamate from L-glutamate and N(2)-acetyl-L-ornithine (cyclic): step 1/1. Its pathway is amino-acid biosynthesis; L-arginine biosynthesis; N(2)-acetyl-L-ornithine from L-glutamate: step 1/4. In terms of biological role, catalyzes two activities which are involved in the cyclic version of arginine biosynthesis: the synthesis of acetylglutamate from glutamate and acetyl-CoA, and of ornithine by transacetylation between acetylornithine and glutamate. The protein is Arginine biosynthesis bifunctional protein ArgJ, chloroplastic of Vitis vinifera (Grape).